We begin with the raw amino-acid sequence, 494 residues long: Lysine--tRNA ligase (494 aa).

2 residues coordinate Mg(2+): Glu407 and Glu414.

The protein belongs to the class-II aminoacyl-tRNA synthetase family. In terms of assembly, homodimer. It depends on Mg(2+) as a cofactor.

The protein resides in the cytoplasm. It catalyses the reaction tRNA(Lys) + L-lysine + ATP = L-lysyl-tRNA(Lys) + AMP + diphosphate. This chain is Lysine--tRNA ligase, found in Lactococcus lactis subsp. lactis (strain IL1403) (Streptococcus lactis).